Consider the following 402-residue polypeptide: DNA primase DnaG (402 aa).

In terms of domain architecture, Toprim spans 165-243; it reads PNLIIVEGRA…KIDFVARAPV (79 aa). Positions 171, 216, and 218 each coordinate Mg(2+).

It belongs to the archaeal DnaG primase family. In terms of assembly, forms a ternary complex with MCM helicase and DNA. Component of the archaeal exosome complex. It depends on Mg(2+) as a cofactor.

The catalysed reaction is ssDNA + n NTP = ssDNA/pppN(pN)n-1 hybrid + (n-1) diphosphate.. Functionally, RNA polymerase that catalyzes the synthesis of short RNA molecules used as primers for DNA polymerase during DNA replication. Also part of the exosome, which is a complex involved in RNA degradation. Acts as a poly(A)-binding protein that enhances the interaction between heteromeric, adenine-rich transcripts and the exosome. This Saccharolobus islandicus (strain Y.N.15.51 / Yellowstone #2) (Sulfolobus islandicus) protein is DNA primase DnaG.